Here is a 725-residue protein sequence, read N- to C-terminus: D-(-)-3-hydroxybutyrate oligomer hydrolase (725 aa).

An N-terminal signal peptide occupies residues 1–22; sequence MNTTRDANRLRQRASLSGLALA. Catalysis depends on serine 322, which acts as the Charge relay system.

This sequence belongs to the D-(-)-3-hydroxybutyrate oligomer hydrolase family.

The protein localises to the secreted. It catalyses the reaction (3R)-hydroxybutanoate dimer + H2O = 2 (R)-3-hydroxybutanoate + H(+). It functions in the pathway lipid metabolism; butanoate metabolism. Functionally, participates in the degradation of poly-3-hydroxybutyrate (PHB). It works downstream of poly(3-hydroxybutyrate) depolymerase, hydrolyzing D(-)-3-hydroxybutyrate oligomers of various length (3HB-oligomers) into 3HB-monomers. In Ralstonia nicotianae (strain ATCC BAA-1114 / GMI1000) (Ralstonia solanacearum), this protein is D-(-)-3-hydroxybutyrate oligomer hydrolase.